An 87-amino-acid chain; its full sequence is MKLVVVQFFIISLLLTSSFSVLSSADSSCGGKCNVRCSKAGQHEECLKYCNICCQKCNCVPSGTFGHKDECPCYRDMKNSKGGSKCP.

The first 25 residues, 1 to 25 (MKLVVVQFFIISLLLTSSFSVLSSA), serve as a signal peptide directing secretion.

This sequence belongs to the GASA family. In terms of processing, six disulfide bonds may be present. Expressed in roots and developing seeds.

It is found in the secreted. Its function is as follows. Gibberellin-regulated protein that may function in hormonal controlled steps of development such as seed germination, flowering and seed maturation. In Arabidopsis thaliana (Mouse-ear cress), this protein is Gibberellin-regulated protein 8.